A 463-amino-acid polypeptide reads, in one-letter code: Immune-associated nucleotide-binding protein 10 (463 aa).

The AIG1-type G domain occupies 3–211; the sequence is EPIKNIVLVG…YTYQLHRKIK (209 aa). Residues 12-19 form a G1 region; sequence GRTGNGKS. GTP is bound by residues 12 to 20 and Ser-33; that span reads GRTGNGKSS. The tract at residues 39–43 is G2; sequence GVTMI. The G3 stretch occupies residues 61–64; the sequence is DTPG. The segment at 131 to 134 is G4; sequence TGGD. Residues 170 to 172 form a G5 region; sequence DNK. Asn-171 lines the GTP pocket. The stretch at 173-308 forms a coiled coil; sequence SKDEKKKVEQ…KQLIAQANRM (136 aa).

It belongs to the TRAFAC class TrmE-Era-EngA-EngB-Septin-like GTPase superfamily. AIG1/Toc34/Toc159-like paraseptin GTPase family. IAN subfamily. Expressed in radicles of the germinating seeds.

The sequence is that of Immune-associated nucleotide-binding protein 10 from Arabidopsis thaliana (Mouse-ear cress).